Here is a 701-residue protein sequence, read N- to C-terminus: DNA ligase (701 aa).

NAD(+)-binding positions include 43–47, 92–93, and glutamate 126; these read DADYD and SL. Lysine 128 serves as the catalytic N6-AMP-lysine intermediate. 4 residues coordinate NAD(+): arginine 149, glutamate 186, lysine 302, and lysine 326. Zn(2+) contacts are provided by cysteine 417, cysteine 420, cysteine 440, and cysteine 446. The region spanning 622–701 is the BRCT domain; it reads ETGSPVTGKT…DEWLALIGET (80 aa).

The protein belongs to the NAD-dependent DNA ligase family. LigA subfamily. Mg(2+) serves as cofactor. Requires Mn(2+) as cofactor.

It carries out the reaction NAD(+) + (deoxyribonucleotide)n-3'-hydroxyl + 5'-phospho-(deoxyribonucleotide)m = (deoxyribonucleotide)n+m + AMP + beta-nicotinamide D-nucleotide.. Its function is as follows. DNA ligase that catalyzes the formation of phosphodiester linkages between 5'-phosphoryl and 3'-hydroxyl groups in double-stranded DNA using NAD as a coenzyme and as the energy source for the reaction. It is essential for DNA replication and repair of damaged DNA. In Hyphomonas neptunium (strain ATCC 15444), this protein is DNA ligase.